We begin with the raw amino-acid sequence, 535 residues long: T-complex protein 1 subunit beta (535 aa).

The residue at position 1 (methionine 1) is an N-acetylmethionine. The residue at position 2 (alanine 2) is an N-acetylalanine. Phosphoserine is present on serine 3. Residue lysine 13 is modified to N6-acetyllysine. Glycine 44 lines the ADP pocket. Residue glycine 44 coordinates ATP. A Phosphoserine modification is found at serine 60. Residue aspartate 97 coordinates Mg(2+). Positions 98, 99, 100, and 101 each coordinate ADP. Positions 98, 99, and 100 each coordinate ATP. Position 154 is an N6-acetyllysine (lysine 154). 2 residues coordinate ADP: serine 168 and serine 169. An N6-acetyllysine modification is found at lysine 181. A Glycyl lysine isopeptide (Lys-Gly) (interchain with G-Cter in SUMO2) cross-link involves residue lysine 248. The residue at position 260 (serine 260) is a Phosphoserine. Threonine 261 is modified (phosphothreonine). Residues glycine 410, glutamate 495, and lysine 500 each coordinate ADP. Residues glutamate 495 and lysine 500 each contribute to the ATP site.

Belongs to the TCP-1 chaperonin family. In terms of assembly, component of the chaperonin-containing T-complex (TRiC), a hexadecamer composed of two identical back-to-back stacked rings enclosing a protein folding chamber. Each ring is made up of eight different subunits: TCP1/CCT1, CCT2, CCT3, CCT4, CCT5, CCT6A/CCT6, CCT7, CCT8. Interacts with PACRG. Interacts with FLCN. Interacts with DLEC1. Interacts with SVEP1.

It is found in the cytoplasm. It catalyses the reaction ATP + H2O = ADP + phosphate + H(+). Functionally, component of the chaperonin-containing T-complex (TRiC), a molecular chaperone complex that assists the folding of actin, tubulin and other proteins upon ATP hydrolysis. The TRiC complex mediates the folding of WRAP53/TCAB1, thereby regulating telomere maintenance. As part of the TRiC complex may play a role in the assembly of BBSome, a complex involved in ciliogenesis regulating transports vesicles to the cilia. The protein is T-complex protein 1 subunit beta of Homo sapiens (Human).